Consider the following 494-residue polypeptide: Glutamate--tRNA ligase (494 aa).

A 'HIGH' region motif is present at residues 10–20 (PSPTGDPHVGT). Cys-107, Cys-109, Cys-134, and His-136 together coordinate Zn(2+). The 'KMSKS' region signature appears at 251 to 255 (KLSKR). Lys-254 lines the ATP pocket.

Belongs to the class-I aminoacyl-tRNA synthetase family. Glutamate--tRNA ligase type 1 subfamily. As to quaternary structure, monomer. The cofactor is Zn(2+).

The protein localises to the cytoplasm. It catalyses the reaction tRNA(Glu) + L-glutamate + ATP = L-glutamyl-tRNA(Glu) + AMP + diphosphate. Catalyzes the attachment of glutamate to tRNA(Glu) in a two-step reaction: glutamate is first activated by ATP to form Glu-AMP and then transferred to the acceptor end of tRNA(Glu). The sequence is that of Glutamate--tRNA ligase from Pseudomonas aeruginosa (strain UCBPP-PA14).